A 239-amino-acid chain; its full sequence is tRNA (guanine-N(1)-)-methyltransferase (239 aa).

S-adenosyl-L-methionine is bound by residues Gly108 and 127–132 (LGDFVL).

Belongs to the RNA methyltransferase TrmD family. In terms of assembly, homodimer.

The protein localises to the cytoplasm. It catalyses the reaction guanosine(37) in tRNA + S-adenosyl-L-methionine = N(1)-methylguanosine(37) in tRNA + S-adenosyl-L-homocysteine + H(+). Functionally, specifically methylates guanosine-37 in various tRNAs. This chain is tRNA (guanine-N(1)-)-methyltransferase, found in Streptococcus thermophilus (strain CNRZ 1066).